Here is a 627-residue protein sequence, read N- to C-terminus: MIRYTVAGHSRRCVVGASKRVGAIKCITVAATKRFISNKPNEVFTKLTNDNDPKRDAFFKYTWGSWLKNDKQEKEKRFTKFSIEGLNRILNDIYIQSNEMAKAPDGKILPPVFNKNLTVSLVNNVVPKNIGKINPNEKVQVTTLSSIHEGKHHRIYKVDTNLNKAFILRIPYPLENENTLSYRIRSEVATMDFADLKLGIKVPKIFCYGVNSLNPVRQPFVLQEFIEGELLMKDWDPLIEDGSSNQKKYDNVIKQVSDFQSKLVSLKLNAFGSIYFNNDLKDGNEKEFVKEDIYDGETNPDLQNRWKIGPSVERCLWRHKSHLDFHKQMKPFLGPWPKKSPMDIIKNTGLLEAENAKTRIAMKEAGSSAELMYPRTLKEQITTYENLAKIAPDLFNVKTKAIPNMQELLSPRLFHPDLDPMNIIVNKEAQEAYLLDFEGACTKPFILQNSPQFIAYDGPKIYDLKEDITDFDKLSEAEKAQYQFMYKRTRNQHQWEKKLNDNNPKLITAVAPPVKLLRSPYIAAVERKTEEEYLLIDESLLQLKEVWDIFAQNDLVNQKKFPLNYSKEDIERHVEDLQKLHEKLISTPFAATQGWIPQDMFDQLLNSGSIVKQENGDYTVKQPEATK.

The transit peptide at 1–43 directs the protein to the mitochondrion; sequence MIRYTVAGHSRRCVVGASKRVGAIKCITVAATKRFISNKPNEV.

It belongs to the AIM9 family.

It is found in the mitochondrion. The chain is Altered inheritance of mitochondria protein 9, mitochondrial (AIM9) from Saccharomyces cerevisiae (strain YJM789) (Baker's yeast).